Reading from the N-terminus, the 328-residue chain is Ribose-phosphate pyrophosphokinase (328 aa).

Residues 39 to 41 and 98 to 99 each bind ATP; these read DGE and RQ. Mg(2+)-binding residues include histidine 132 and aspartate 172. Lysine 195 is an active-site residue. Residues arginine 197, aspartate 221, and 225-229 each bind D-ribose 5-phosphate; that span reads DTGGT.

The protein belongs to the ribose-phosphate pyrophosphokinase family. Class I subfamily. Homohexamer. It depends on Mg(2+) as a cofactor.

The protein localises to the cytoplasm. The catalysed reaction is D-ribose 5-phosphate + ATP = 5-phospho-alpha-D-ribose 1-diphosphate + AMP + H(+). Its pathway is metabolic intermediate biosynthesis; 5-phospho-alpha-D-ribose 1-diphosphate biosynthesis; 5-phospho-alpha-D-ribose 1-diphosphate from D-ribose 5-phosphate (route I): step 1/1. Functionally, involved in the biosynthesis of the central metabolite phospho-alpha-D-ribosyl-1-pyrophosphate (PRPP) via the transfer of pyrophosphoryl group from ATP to 1-hydroxyl of ribose-5-phosphate (Rib-5-P). This chain is Ribose-phosphate pyrophosphokinase, found in Mycoplasma pneumoniae (strain ATCC 29342 / M129 / Subtype 1) (Mycoplasmoides pneumoniae).